We begin with the raw amino-acid sequence, 198 residues long: Glycerol-3-phosphate acyltransferase (198 aa).

Transmembrane regions (helical) follow at residues 2 to 22, 53 to 73, 79 to 99, 113 to 133, and 152 to 172; these read IIDLIWIITSYVIGSIPFGVL, LGFITLFFDVLKGFFPVVIAT, PFMYTMTGLAAIIGHLYSCFL, VLIPIAFWQLLFAAILCTFFI, and IILFITGKFAYIPLSLIIMAL.

The protein belongs to the PlsY family. Probably interacts with PlsX.

The protein resides in the cell membrane. The catalysed reaction is an acyl phosphate + sn-glycerol 3-phosphate = a 1-acyl-sn-glycero-3-phosphate + phosphate. Its pathway is lipid metabolism; phospholipid metabolism. In terms of biological role, catalyzes the transfer of an acyl group from acyl-phosphate (acyl-PO(4)) to glycerol-3-phosphate (G3P) to form lysophosphatidic acid (LPA). This enzyme utilizes acyl-phosphate as fatty acyl donor, but not acyl-CoA or acyl-ACP. This chain is Glycerol-3-phosphate acyltransferase, found in Lawsonia intracellularis (strain PHE/MN1-00).